The following is a 121-amino-acid chain: Small ribosomal subunit protein bS6 (121 aa).

The interval 94–121 is disordered; it reads KAETGPSAVMKRVEKEEARKSSQQETAA. Residues 104–115 show a composition bias toward basic and acidic residues; the sequence is KRVEKEEARKSS.

This sequence belongs to the bacterial ribosomal protein bS6 family.

Functionally, binds together with bS18 to 16S ribosomal RNA. The polypeptide is Small ribosomal subunit protein bS6 (Leptothrix cholodnii (strain ATCC 51168 / LMG 8142 / SP-6) (Leptothrix discophora (strain SP-6))).